The primary structure comprises 880 residues: Valine--tRNA ligase (880 aa).

Positions 49–59 (PNVTGKLHLGH) match the 'HIGH' region motif. The 'KMSKS' region motif lies at 525-529 (KMSKS). Lysine 528 provides a ligand contact to ATP. A coiled-coil region spans residues 809–879 (LAGLLDLEEE…AVRARIKELK (71 aa)).

Belongs to the class-I aminoacyl-tRNA synthetase family. ValS type 1 subfamily. In terms of assembly, monomer.

The protein resides in the cytoplasm. It catalyses the reaction tRNA(Val) + L-valine + ATP = L-valyl-tRNA(Val) + AMP + diphosphate. In terms of biological role, catalyzes the attachment of valine to tRNA(Val). As ValRS can inadvertently accommodate and process structurally similar amino acids such as threonine, to avoid such errors, it has a 'posttransfer' editing activity that hydrolyzes mischarged Thr-tRNA(Val) in a tRNA-dependent manner. This is Valine--tRNA ligase from Halalkalibacterium halodurans (strain ATCC BAA-125 / DSM 18197 / FERM 7344 / JCM 9153 / C-125) (Bacillus halodurans).